A 120-amino-acid chain; its full sequence is Fumarate reductase subunit D (120 aa).

3 helical membrane-spanning segments follow: residues Phe25–Ile45, Val55–Pro75, and Ile100–Ile120.

The protein belongs to the FrdD family. In terms of assembly, part of an enzyme complex containing four subunits: a flavoprotein (FrdA), an iron-sulfur protein (FrdB), and two hydrophobic anchor proteins (FrdC and FrdD).

The protein localises to the cell inner membrane. Its function is as follows. Anchors the catalytic components of the fumarate reductase complex to the cell membrane, binds quinones. In Aliivibrio salmonicida (strain LFI1238) (Vibrio salmonicida (strain LFI1238)), this protein is Fumarate reductase subunit D.